We begin with the raw amino-acid sequence, 201 residues long: LexA repressor (201 aa).

The segment at residues 28–48 (RAEIANQLGFRSANAAEEHLK) is a DNA-binding region (H-T-H motif). Catalysis depends on for autocatalytic cleavage activity residues Ser118 and Lys155.

This sequence belongs to the peptidase S24 family. In terms of assembly, homodimer.

It catalyses the reaction Hydrolysis of Ala-|-Gly bond in repressor LexA.. Functionally, represses a number of genes involved in the response to DNA damage (SOS response), including recA and lexA. In the presence of single-stranded DNA, RecA interacts with LexA causing an autocatalytic cleavage which disrupts the DNA-binding part of LexA, leading to derepression of the SOS regulon and eventually DNA repair. This Saccharophagus degradans (strain 2-40 / ATCC 43961 / DSM 17024) protein is LexA repressor.